The following is a 442-amino-acid chain: NADH-quinone oxidoreductase subunit D (442 aa).

It belongs to the complex I 49 kDa subunit family. In terms of assembly, NDH-1 is composed of 14 different subunits. Subunits NuoB, C, D, E, F, and G constitute the peripheral sector of the complex.

It localises to the cell membrane. The catalysed reaction is a quinone + NADH + 5 H(+)(in) = a quinol + NAD(+) + 4 H(+)(out). Functionally, NDH-1 shuttles electrons from NADH, via FMN and iron-sulfur (Fe-S) centers, to quinones in the respiratory chain. The immediate electron acceptor for the enzyme in this species is believed to be a menaquinone. Couples the redox reaction to proton translocation (for every two electrons transferred, four hydrogen ions are translocated across the cytoplasmic membrane), and thus conserves the redox energy in a proton gradient. This chain is NADH-quinone oxidoreductase subunit D, found in Mycolicibacterium vanbaalenii (strain DSM 7251 / JCM 13017 / BCRC 16820 / KCTC 9966 / NRRL B-24157 / PYR-1) (Mycobacterium vanbaalenii).